The sequence spans 361 residues: GDP-mannose 4,6 dehydratase 1 (361 aa).

Residues 23–28 (GITGQD), 79–80 (DL), 101–105 (LAAQS), and tyrosine 116 each bind NADP(+). The active site involves serine 150. Active-site nucleophile residues include glutamate 152 and tyrosine 173. NADP(+) is bound by residues lysine 177, histidine 203, and arginine 208.

Belongs to the NAD(P)-dependent epimerase/dehydratase family. GDP-mannose 4,6-dehydratase subfamily. As to quaternary structure, homotetramer. Requires NADP(+) as cofactor. Expressed in roots,stipules and pollen just before anthesis. Primarily localized to the root meristem and columella root cap. Not expressed in emerging lateral roots.

It carries out the reaction GDP-alpha-D-mannose = GDP-4-dehydro-alpha-D-rhamnose + H2O. It participates in nucleotide-sugar biosynthesis; GDP-L-fucose biosynthesis via de novo pathway; GDP-L-fucose from GDP-alpha-D-mannose: step 1/2. In terms of biological role, catalyzes the conversion of GDP-D-mannose to GDP-4-dehydro-6-deoxy-D-mannose. This Arabidopsis thaliana (Mouse-ear cress) protein is GDP-mannose 4,6 dehydratase 1 (GMD1).